The chain runs to 120 residues: Small ribosomal subunit protein eS25 (120 aa).

Positions 1 to 32 are disordered; the sequence is MPPKAGQTKKAKMEAANKGAKKTTKKWSKGQS. A compositionally biased stretch (basic residues) spans 19-28; the sequence is GAKKTTKKWS.

This sequence belongs to the eukaryotic ribosomal protein eS25 family.

This chain is Small ribosomal subunit protein eS25 (RPS25), found in Leishmania infantum.